The sequence spans 117 residues: Large ribosomal subunit protein uL18 (117 aa).

Belongs to the universal ribosomal protein uL18 family. Part of the 50S ribosomal subunit; part of the 5S rRNA/L5/L18/L25 subcomplex. Contacts the 5S and 23S rRNAs.

Functionally, this is one of the proteins that bind and probably mediate the attachment of the 5S RNA into the large ribosomal subunit, where it forms part of the central protuberance. The polypeptide is Large ribosomal subunit protein uL18 (Histophilus somni (strain 129Pt) (Haemophilus somnus)).